Reading from the N-terminus, the 194-residue chain is Imidazoleglycerol-phosphate dehydratase (194 aa).

This sequence belongs to the imidazoleglycerol-phosphate dehydratase family.

It is found in the cytoplasm. It carries out the reaction D-erythro-1-(imidazol-4-yl)glycerol 3-phosphate = 3-(imidazol-4-yl)-2-oxopropyl phosphate + H2O. The protein operates within amino-acid biosynthesis; L-histidine biosynthesis; L-histidine from 5-phospho-alpha-D-ribose 1-diphosphate: step 6/9. This Bacillus cereus (strain ZK / E33L) protein is Imidazoleglycerol-phosphate dehydratase.